The chain runs to 492 residues: MSESVLETERYAHEELERLQQAIVDRQVANPKAPRERLRLEHQSAQFLNQFRETSKKLLVSHESSDRLKDQEVARINADDDLTEFYKSLGEIQEFHKKYPDHKVEDLSQLYSIKPSQPGIDEIDTLFRGEEMYGRFMDLNECYEEYINLSNVQHISYLEYLKNLEDFDQIPKPEKNQTYINYITHLYEYLVSFYRRTHPLSNLDKIIAVFDTEFDAAWEAGLPGWYSHNAEAEKDGKDSTEAFYCEVCQKFFGKITVFEAHKKSKAHNKAVKRMQSSSPSTTSNTNEKQKGPKAIARIEFLIKKLTSLLDDVRKDTRENVVRRQTLTAAERLAEVEAAEREAFEQSTPSVSVEGNQDEESDQDDEEKIYNPLKLPLGWDGKPIPFWLWKLHGLGKEFPCEICGNYVYMGRKAFDKHFTEQRHIYGLKCLGISPSPLFNQITSIDEALQLWQKYKVDSKKRETTMASLNEMEDDEGNVMSEKVYNDLKAQGLL.

The C2H2-type zinc finger occupies 243 to 267 (FYCEVCQKFFGKITVFEAHKKSKAH). Disordered regions lie at residues 268–291 (NKAVKRMQSSSPSTTSNTNEKQKG) and 337–365 (AAEREAFEQSTPSVSVEGNQDEESDQDDE). A compositionally biased stretch (low complexity) spans 276–286 (SSSPSTTSNTN). A compositionally biased stretch (polar residues) spans 345-354 (QSTPSVSVEG). Residues 355 to 365 (NQDEESDQDDE) show a composition bias toward acidic residues. Residue Ser360 is modified to Phosphoserine. A Matrin-type zinc finger spans residues 397-428 (FPCEICGNYVYMGRKAFDKHFTEQRHIYGLKC).

The protein belongs to the SF3A3 family. As to quaternary structure, belongs to the 40S cdc5-associated complex (or cwf complex), a spliceosome sub-complex reminiscent of a late-stage spliceosome composed of the U2, U5 and U6 snRNAs and at least brr2, cdc5, cwf2/prp3, cwf3/syf1, cwf4/syf3, cwf5/ecm2, spp42/cwf6, cwf7/spf27, cwf8, cwf9, cwf10, cwf11, cwf12, prp45/cwf13, cwf14, cwf15, cwf16, cwf17, cwf18, cwf19, cwf20, cwf21, cwf22, cwf23, cwf24, cwf25, cwf26, cyp7/cwf27, cwf28, cwf29/ist3, lea1, msl1, prp5/cwf1, prp10, prp12/sap130, prp17, prp22, sap61, sap62, sap114, sap145, slu7, smb1, smd1, smd3, smf1, smg1 and syf2.

It localises to the nucleus. The protein localises to the cytoplasm. Involved in mRNA splicing where it associates with cdc5 and the other cwf proteins as part of the spliceosome. In Schizosaccharomyces pombe (strain 972 / ATCC 24843) (Fission yeast), this protein is Pre-mRNA-splicing factor sap61 (sap61).